Consider the following 192-residue polypeptide: Thiol-disulfide oxidoreductase ResA (192 aa).

The helical; Signal-anchor for type II membrane protein transmembrane segment at 22–41 (SSILLILVAAVVFAIVSNMK) threads the bilayer. Positions 47 to 189 (YRVGDAAPDF…LEGYLNDIAP (143 aa)) constitute a Thioredoxin domain. Cysteine 89 and cysteine 92 are oxidised to a cystine.

The protein belongs to the thioredoxin family. ResA subfamily.

Its subcellular location is the cell membrane. It functions in the pathway protein modification; cytochrome c assembly. Functionally, thiol-disulfide oxidoreductase which is required in disulfide reduction during c-type cytochrome synthesis. May accept reducing equivalents from CcdA, leading to breakage of disulfide bonds in apocytochrome c; following this reduction heme can be covalently attached. The protein is Thiol-disulfide oxidoreductase ResA of Oceanobacillus iheyensis (strain DSM 14371 / CIP 107618 / JCM 11309 / KCTC 3954 / HTE831).